Consider the following 475-residue polypeptide: Ribulose bisphosphate carboxylase large chain (475 aa).

Positions 1–2 are excised as a propeptide; the sequence is MS. An N-acetylproline modification is found at Pro-3. Lys-14 bears the N6,N6,N6-trimethyllysine mark. The substrate site is built by Asn-123 and Thr-173. Lys-175 acts as the Proton acceptor in catalysis. Lys-177 lines the substrate pocket. 3 residues coordinate Mg(2+): Lys-201, Asp-203, and Glu-204. The residue at position 201 (Lys-201) is an N6-carboxylysine. The active-site Proton acceptor is His-294. Substrate-binding residues include Arg-295, His-327, and Ser-379.

This sequence belongs to the RuBisCO large chain family. Type I subfamily. In terms of assembly, heterohexadecamer of 8 large chains and 8 small chains; disulfide-linked. The disulfide link is formed within the large subunit homodimers. Requires Mg(2+) as cofactor. Post-translationally, the disulfide bond which can form in the large chain dimeric partners within the hexadecamer appears to be associated with oxidative stress and protein turnover.

It is found in the plastid. Its subcellular location is the chloroplast. The catalysed reaction is 2 (2R)-3-phosphoglycerate + 2 H(+) = D-ribulose 1,5-bisphosphate + CO2 + H2O. It carries out the reaction D-ribulose 1,5-bisphosphate + O2 = 2-phosphoglycolate + (2R)-3-phosphoglycerate + 2 H(+). Its function is as follows. RuBisCO catalyzes two reactions: the carboxylation of D-ribulose 1,5-bisphosphate, the primary event in carbon dioxide fixation, as well as the oxidative fragmentation of the pentose substrate in the photorespiration process. Both reactions occur simultaneously and in competition at the same active site. This chain is Ribulose bisphosphate carboxylase large chain, found in Carica papaya (Papaya).